The primary structure comprises 388 residues: MKIHEYQGKEILRKFGVAVPRGKPAFSVDEAVKVAEELGGPVWVVKAQIHAGGRGKGGGVKVAKSIEQVREYANQILGMQLVTHQTGPEGQKVNRLMIEEGADIKQELYVSLVVDRVSQKIVLMGSSEGGMDIEEVAEKHPELIHKVIVEPSTGLLDAQADDLAAKIGVPAASIPQARAILQGLYKAFWETDASLAEINPLNVSGDGKVTALDAKFNFDSNALFRHPEIVAYRDLDEEDPAEIEASKFDLAYISLDGNIGCLVNGAGLAMATMDTIKLFGGEPANFLDVGGGATTEKVTEAFKLMLKNPGLKAILVNIFGGIMRCDVIAEGVIAGSKAVNLNVPLVVRMKGTNEDLGKKMLADSGLPIISADSMEEAAQKVVAAAAGK.

The 236-residue stretch at 9-244 (KEILRKFGVA…LDEEDPAEIE (236 aa)) folds into the ATP-grasp domain. Residues Lys46, 53 to 55 (GRG), Glu99, Ala102, and Glu107 each bind ATP. 2 residues coordinate Mg(2+): Asn199 and Asp213. Residues Asn264 and 321-323 (GIM) contribute to the substrate site.

It belongs to the succinate/malate CoA ligase beta subunit family. Heterotetramer of two alpha and two beta subunits. Mg(2+) serves as cofactor.

It catalyses the reaction succinate + ATP + CoA = succinyl-CoA + ADP + phosphate. The catalysed reaction is GTP + succinate + CoA = succinyl-CoA + GDP + phosphate. Its pathway is carbohydrate metabolism; tricarboxylic acid cycle; succinate from succinyl-CoA (ligase route): step 1/1. Its function is as follows. Succinyl-CoA synthetase functions in the citric acid cycle (TCA), coupling the hydrolysis of succinyl-CoA to the synthesis of either ATP or GTP and thus represents the only step of substrate-level phosphorylation in the TCA. The beta subunit provides nucleotide specificity of the enzyme and binds the substrate succinate, while the binding sites for coenzyme A and phosphate are found in the alpha subunit. The protein is Succinate--CoA ligase [ADP-forming] subunit beta of Burkholderia cenocepacia (strain ATCC BAA-245 / DSM 16553 / LMG 16656 / NCTC 13227 / J2315 / CF5610) (Burkholderia cepacia (strain J2315)).